A 156-amino-acid polypeptide reads, in one-letter code: Protein FAM162A (156 aa).

Residues 37 to 57 (TNGFCSKPQESPKPPDQHTYS) form a disordered region. Positions 78–104 (RFKKEDEIPETVSFEMLDAAKNKVRVK) are required for proapoptotic activity. The helical transmembrane segment at 105–122 (ISYVMIALTVAGCVLMVI) threads the bilayer.

The protein belongs to the UPF0389 family. Interacts with HSP90AB1; HSP90AB1 is essential for FAM162A mitochondrial localization and pro-apoptotic activity. Interacts with VDAC2; the interaction is probably involved in inducing mitochondrial permeability transition.

Its subcellular location is the mitochondrion membrane. Functionally, proposed to be involved in regulation of apoptosis; the exact mechanism may differ between cell types/tissues. May be involved in hypoxia-induced cell death of transformed cells implicating cytochrome C release and caspase activation (such as CASP9) and inducing mitochondrial permeability transition. May be involved in hypoxia-induced cell death of neuronal cells probably by promoting release of AIFM1 from mitochondria to cytoplasm and its translocation to the nucleus; however, the involvement of caspases has been reported conflictingly. The chain is Protein FAM162A (FAM162A) from Bos taurus (Bovine).